The primary structure comprises 239 residues: Small ribosomal subunit protein uS2 (239 aa).

This sequence belongs to the universal ribosomal protein uS2 family.

The chain is Small ribosomal subunit protein uS2 from Synechococcus sp. (strain CC9902).